A 120-amino-acid chain; its full sequence is Large ribosomal subunit protein uL18 (120 aa).

The protein belongs to the universal ribosomal protein uL18 family. Part of the 50S ribosomal subunit; part of the 5S rRNA/L5/L18/L25 subcomplex. Contacts the 5S and 23S rRNAs.

This is one of the proteins that bind and probably mediate the attachment of the 5S RNA into the large ribosomal subunit, where it forms part of the central protuberance. The sequence is that of Large ribosomal subunit protein uL18 from Xanthobacter autotrophicus (strain ATCC BAA-1158 / Py2).